The chain runs to 522 residues: TNF receptor-associated factor 6 (522 aa).

The interaction with TAX1BP1 stretch occupies residues 1-354 (MSLLNCENSC…EAQQCNGIYI (354 aa)). The segment at 70–109 (CPICLMALREAVQTPCGHRFCKACIIKSIRDAGHKCPVDN) adopts an RING-type zinc-finger fold. A Glycyl lysine isopeptide (Lys-Gly) (interchain with G-Cter in SUMO); alternate cross-link involves residue Lys-124. Lys-124 participates in a covalent cross-link: Glycyl lysine isopeptide (Lys-Gly) (interchain with G-Cter in ubiquitin); alternate. A Glycyl lysine isopeptide (Lys-Gly) (interchain with G-Cter in SUMO) cross-link involves residue Lys-142. 2 TRAF-type zinc fingers span residues 150–202 (DHQA…EDKE) and 203–259 (IHDQ…NHLA). Residues 288-348 (YISEVRNFQE…DKVAEIEAQQ (61 aa)) adopt a coiled-coil conformation. Lys-319 is covalently cross-linked (Glycyl lysine isopeptide (Lys-Gly) (interchain with G-Cter in ubiquitin)). One can recognise an MATH domain in the interval 350-499 (NGIYIWKIGN…DDTLLVRCEV (150 aa)). The interval 355–522 (WKIGNFGMHL…FQPRSTDAGV (168 aa)) is interaction with TANK. Lys-453 is covalently cross-linked (Glycyl lysine isopeptide (Lys-Gly) (interchain with G-Cter in SUMO)).

This sequence belongs to the TNF receptor-associated factor family. A subfamily. As to quaternary structure, homotrimer. Homooligomer. N-terminal region is dimeric while C-terminal region is trimeric; maybe providing a mode of oligomerization. Upon IL1B treatment, forms a complex with PELI1, IRAK1, IRAK4 and MYD88; this complex recruits MAP3K7/TAK1, TAB1 and TAB2 to mediate NF-kappa-B activation. Direct binding of SMAD6 to PELI1 prevents the complex formation and hence negatively regulates IL1R-TLR signaling and eventually NF-kappa-B-mediated gene expression. Binds to TNFRSF5/CD40 and TNFRSF11A/RANK. Associates with NGFR, TNFRSF17, IRAK2, IRAK3, RIPK2, MAP3K1, MAP3K5, MAP3K14, CSK, TRAF, TRAF-interacting protein TRIP and TNF receptor associated protein TDP2. Interacts with IL17R. Interacts with SQSTM1 bridging NTRK1 and NGFR. Forms a ternary complex with SQSTM1 and PRKCZ. Interacts with PELI2 and PELI3. Binds UBE2V1. Interacts with TAX1BP1; this interaction mediates deubiquitination of TRAF6 and inhibition of NF-kappa-B activation. Interacts with ZNF675. Interacts with ARRB1 and ARRB2. Interacts with MAP3K7 and TAB1/MAP3K7IP1; during IL-1 signaling. Interacts with UBE2N. Interacts with TGFBR1, HDAC1 and RANGAP1. Interacts with AKT1, AKT2 and AKT3. Interacts (via TRAF domains) with NUMBL (via C-terminal). Interacts with RBCK1. Interacts with LIMD1 (via LIM domains). Interacts with RSAD2/viperin. Interacts (via C-terminus) with EIF2AK2/PKR (via the kinase catalytic domain). Interacts with ZFAND5. Interacts with IL1RL1. Interacts with TRAFD1. Interacts with AJUBA. Interacts with MAVS/IPS1. Interacts (via TRAF domains) with DYNC2I2 (via WD domains). Interacts with IFIT3 (via N-terminus). Interacts with TICAM2. Interacts with CARD14. Interacts with CD40 and MAP3K8; the interaction is required for ERK activation. Interacts with TICAM1 and this interaction is enhanced in the presence of WDFY1. Interacts with TANK; this interaction increases in response to DNA damage. Interacts with USP10; this interaction increases in response to DNA damage. Interacts with ZC3H12A; this interaction increases in response to DNA damage and is stimulated by TANK. Interacts with WDFY3. Interacts with TRIM13. Interacts with GPS2. Interacts (via C-terminus) with SASH1. Interacts with LRRC19. Interacts with IL17RA and TRAF3IP2. Interacts with TOMM70. Interacts with AMBRA1; interaction is required to mediate 'Lys-63'-linked ubiquitination of ULK1. Interacts with CRBN; this interaction inhibits TLR4-mediated signaling by preventing TRAF6-mediated ubiquitination of ECSIT. Post-translationally, sumoylated on Lys-124, Lys-142 and Lys-453 with SUMO1. Polyubiquitinated on Lys-124 by TRAF3IP2; after cell stimulation with IL17A. Polyubiquitinated on Lys-124; after cell stimulation with IL1B or TGFB. This ligand-induced cell stimulation leads to dimerization/oligomerization of TRAF6 molecules, followed by auto-ubiquitination which involves UBE2N and UBE2V1 and leads to TRAF6 activation. This 'Lys-63' site-specific poly-ubiquitination appears to be associated with the activation of signaling molecules. Endogenous autoubiquitination occurs only for the cytoplasmic form. Deubiquitinated by USP10 in a TANK-dependent manner, leading to the negative regulation of NF-kappaB signaling upon DNA damage. LRRC19 induces 'Lys-63' ubiquitination. Ubiquitinated at Lys-319 by the SCF(FBXL2) complex, leading to its degradation by the proteasome. In terms of processing, (Microbial infection) Deubiquitinated by Epstein-Barr virus BPLF1 on both 'Lys-48' and 'Lys-63'-linked ubiquitin chains; leading to NF-kappa-B signaling inhibition. Expressed in heart, brain, placenta, lung, liver, skeletal muscle, kidney and pancreas.

Its subcellular location is the cytoplasm. The protein resides in the cell cortex. The protein localises to the nucleus. It localises to the lipid droplet. It catalyses the reaction S-ubiquitinyl-[E2 ubiquitin-conjugating enzyme]-L-cysteine + [acceptor protein]-L-lysine = [E2 ubiquitin-conjugating enzyme]-L-cysteine + N(6)-ubiquitinyl-[acceptor protein]-L-lysine.. It participates in protein modification; protein ubiquitination. Its function is as follows. E3 ubiquitin ligase that, together with UBE2N and UBE2V1, mediates the synthesis of 'Lys-63'-linked-polyubiquitin chains conjugated to proteins, such as ECSIT, IKBKG, IRAK1, AKT1 and AKT2. Also mediates ubiquitination of free/unanchored polyubiquitin chain that leads to MAP3K7 activation. Leads to the activation of NF-kappa-B and JUN. Seems to also play a role in dendritic cells (DCs) maturation and/or activation. Represses c-Myb-mediated transactivation, in B-lymphocytes. Adapter protein that seems to play a role in signal transduction initiated via TNF receptor, IL-1 receptor and IL-17 receptor. Regulates osteoclast differentiation by mediating the activation of adapter protein complex 1 (AP-1) and NF-kappa-B, in response to RANK-L stimulation. Together with MAP3K8, mediates CD40 signals that activate ERK in B-cells and macrophages, and thus may play a role in the regulation of immunoglobulin production. Acts as a regulator of the JNK and NF-kappa-B signaling pathways by initiating assembly of heterotypic 'Lys-63'-/'Lys-48'-linked branched ubiquitin chains that are then recognized by TAB2: TRAF6 catalyzes initial 'Lys-63'-linked-polyubiquitin chains that are then branched via 'Lys-48'-linked polyubiquitin by HUWE1. 'Lys-63'-/'Lys-48'-linked branched ubiquitin chains protect 'Lys-63'-linkages from CYLD deubiquitination. Participates also in the TCR signaling by ubiquitinating LAT. In Homo sapiens (Human), this protein is TNF receptor-associated factor 6 (TRAF6).